A 48-amino-acid polypeptide reads, in one-letter code: Sulfide dehydrogenase [flavocytochrome c] flavoprotein chain (48 aa).

V40–N46 contributes to the FAD binding site.

Dimer of one cytochrome and one flavoprotein.

The protein localises to the periplasm. It catalyses the reaction hydrogen sulfide + 2 Fe(III)-[cytochrome c] = sulfur + 2 Fe(II)-[cytochrome c] + H(+). The polypeptide is Sulfide dehydrogenase [flavocytochrome c] flavoprotein chain (Chlorobaculum thiosulfatiphilum (Chlorobium limicola f.sp. thiosulfatophilum)).